A 213-amino-acid chain; its full sequence is 3-isopropylmalate dehydratase small subunit (213 aa).

This sequence belongs to the LeuD family. LeuD type 1 subfamily. Heterodimer of LeuC and LeuD.

It catalyses the reaction (2R,3S)-3-isopropylmalate = (2S)-2-isopropylmalate. It functions in the pathway amino-acid biosynthesis; L-leucine biosynthesis; L-leucine from 3-methyl-2-oxobutanoate: step 2/4. In terms of biological role, catalyzes the isomerization between 2-isopropylmalate and 3-isopropylmalate, via the formation of 2-isopropylmaleate. This chain is 3-isopropylmalate dehydratase small subunit, found in Neisseria meningitidis serogroup C / serotype 2a (strain ATCC 700532 / DSM 15464 / FAM18).